Reading from the N-terminus, the 1150-residue chain is ATP-dependent DNA helicase Q-like 4B (1150 aa).

Disordered stretches follow at residues 124 to 143 and 154 to 179; these read TPAI…GSTF and CAHN…FSSS. Over residues 132-142 the composition is skewed to low complexity; that stretch reads TSRTSSTKGST. Residues 327-361 are a coiled coil; it reads DHVEQLHQKRLLLKKQIQQLEILIHNKERKKSQCL. Over residues 416–428 the composition is skewed to basic and acidic residues; sequence YDISSGSEEREQS. Positions 416-446 are disordered; it reads YDISSGSEEREQSVSEVIDVTDTESSNDKKW. Positions 478–653 constitute a Helicase ATP-binding domain; it reads INATMSGCDV…VQALGLVNCV (176 aa). 491–498 contributes to the ATP binding site; the sequence is MPTGGGKS. The DEAH box signature appears at 597–600; that stretch reads DEAH. In terms of domain architecture, Helicase C-terminal spans 678-823; the sequence is DIDKFIRENH…QMKMGYNCKA (146 aa). The 83-residue stretch at 1029–1111 folds into the HRDC domain; it reads SNLSGILLTA…DSTINDHYKT (83 aa). The disordered stretch occupies residues 1106–1150; sequence NDHYKTRPGSGKRRRDENVNPNVAEDDDPDWSASQSHKKVVKNKK. The span at 1141–1150 shows a compositional bias: basic residues; it reads SHKKVVKNKK.

Belongs to the helicase family. RecQ subfamily. Mg(2+) serves as cofactor. It depends on Mn(2+) as a cofactor. As to expression, mostly expressed in roots, seedlings, shoots, shoot apical mersitem, flowers, and siliques.

It is found in the nucleus. The enzyme catalyses Couples ATP hydrolysis with the unwinding of duplex DNA by translocating in the 3'-5' direction.. It carries out the reaction ATP + H2O = ADP + phosphate + H(+). 3'-5' DNA helicase that may play a role in the repair of DNA. Required to promote but not to suppress crossovers. This Arabidopsis thaliana (Mouse-ear cress) protein is ATP-dependent DNA helicase Q-like 4B (RECQL4B).